Reading from the N-terminus, the 525-residue chain is GMP synthase [glutamine-hydrolyzing] (525 aa).

In terms of domain architecture, Glutamine amidotransferase type-1 spans 9–207 (RILILDFGSQ…VQDICGCEAL (199 aa)). The active-site Nucleophile is Cys86. Residues His181 and Glu183 contribute to the active site. Residues 208–400 (WTASNIVEDA…LGLPYDMVYR (193 aa)) form the GMPS ATP-PPase domain. 235–241 (SGGVDSS) is an ATP binding site.

In terms of assembly, homodimer.

The catalysed reaction is XMP + L-glutamine + ATP + H2O = GMP + L-glutamate + AMP + diphosphate + 2 H(+). Its pathway is purine metabolism; GMP biosynthesis; GMP from XMP (L-Gln route): step 1/1. Catalyzes the synthesis of GMP from XMP. The polypeptide is GMP synthase [glutamine-hydrolyzing] (Pseudomonas putida (strain GB-1)).